The following is a 260-amino-acid chain: WUSCHEL-related homeobox 2 (260 aa).

The homeobox; WUS-type DNA-binding region spans 10 to 74 (ASSSRWNPTK…NHKARQRQKQ (65 aa)).

It belongs to the WUS homeobox family.

It is found in the nucleus. Its function is as follows. Probable transcription factor involved in embryonic patterning. Required for apical embryo development after fertilization. Its specific localization to the apical daughter cell of the zygote, while WOX8 is confined to the basal cell, suggests that the asymmetric division of the plant zygote separates determinants of apical and basal cell fates. The chain is WUSCHEL-related homeobox 2 (WOX2) from Arabidopsis thaliana (Mouse-ear cress).